Here is a 424-residue protein sequence, read N- to C-terminus: Tyrosine--tRNA ligase (424 aa).

Tyr37 is a binding site for L-tyrosine. A 'HIGH' region motif is present at residues 42–51 (PTADSLHLGH). Positions 175 and 179 each coordinate L-tyrosine. The 'KMSKS' region signature appears at 235-239 (KFGKT). Lys238 lines the ATP pocket. One can recognise an S4 RNA-binding domain in the interval 357–414 (ADLQQALVNAELVPSRGQARTMIGSNAVAINGEKQADPEYVFTDADRLFGRYTLLRRG).

The protein belongs to the class-I aminoacyl-tRNA synthetase family. TyrS type 1 subfamily. Homodimer.

It localises to the cytoplasm. It carries out the reaction tRNA(Tyr) + L-tyrosine + ATP = L-tyrosyl-tRNA(Tyr) + AMP + diphosphate + H(+). In terms of biological role, catalyzes the attachment of tyrosine to tRNA(Tyr) in a two-step reaction: tyrosine is first activated by ATP to form Tyr-AMP and then transferred to the acceptor end of tRNA(Tyr). The chain is Tyrosine--tRNA ligase from Yersinia pestis bv. Antiqua (strain Antiqua).